We begin with the raw amino-acid sequence, 441 residues long: CBL-interacting serine/threonine-protein kinase 6 (441 aa).

The region spanning 24–278 is the Protein kinase domain; that stretch reads YELGRLLGHG…IEKVMDSPWF (255 aa). ATP-binding positions include 30-38 and lysine 53; that span reads LGHGTFAKV. Aspartate 146 serves as the catalytic Proton acceptor. The interval 164-193 is activation loop; it reads DFGLSAFTEHLKQDGLLHTTCGTPAYVAPE. Position 168 is a phosphoserine (serine 168). A Phosphothreonine modification is found at threonine 182. One can recognise an NAF domain in the interval 310–334; sequence EETETLNAFHIIALSEGFDLSPLFE. Residues 341 to 371 are PPI; sequence KREMRFATSRPASSVISSLEEAARVGNKFDV.

Belongs to the protein kinase superfamily. CAMK Ser/Thr protein kinase family. SNF1 subfamily. In terms of assembly, part of a K(+)-channel calcium-sensing kinase/phosphatase complex composed by a calcium sensor CBL (CBL1, CBL2, CBL3 or CBL9), a kinase CIPK (CIPK6, CIPK16 or CIPK23), a phosphatase PP2C (AIP1) and a K(+)-channel (AKT1). Interacts with AKT1, AKT2,CBL1, CBL2, CBL3, CBL4/SOS3 and CBL9. Mn(2+) is required as a cofactor. In terms of processing, autophosphorylated. Expressed in roots and shoots.

It localises to the endoplasmic reticulum. The enzyme catalyses L-seryl-[protein] + ATP = O-phospho-L-seryl-[protein] + ADP + H(+). It carries out the reaction L-threonyl-[protein] + ATP = O-phospho-L-threonyl-[protein] + ADP + H(+). Its function is as follows. CIPK serine-threonine protein kinases interact with CBL proteins. Binding of a CBL protein to the regulatory NAF domain of CIPK protein lead to the activation of the kinase in a calcium-dependent manner. Downstream of CBL1, CBL2, CBL3 and CBL9, regulates by phosphorylation the K(+) conductance and uptake of AKT1. Binds to CBL4 to modulate AKT2 activity by promoting a kinase interaction-dependent but phosphorylation-independent translocation of the channel to the plasma membrane. The polypeptide is CBL-interacting serine/threonine-protein kinase 6 (CIPK6) (Arabidopsis thaliana (Mouse-ear cress)).